A 133-amino-acid chain; its full sequence is Fatty acid-binding protein homolog 1 (133 aa).

Met1 is modified (N-acetylmethionine). Hexadecanoate is bound by residues Arg107 and 127-129 (RTY).

It belongs to the calycin superfamily. Fatty-acid binding protein (FABP) family.

Functionally, has been implicated in the acquisition, storage, and transport of lipids, and may be important to the organism since it is incapable of synthesizing most of its lipids de novo. The protein is Fatty acid-binding protein homolog 1 (FABP1) of Echinococcus granulosus (Hydatid tapeworm).